The following is a 100-amino-acid chain: Urease subunit gamma (100 aa).

The protein belongs to the urease gamma subunit family. As to quaternary structure, heterotrimer of UreA (gamma), UreB (beta) and UreC (alpha) subunits. Three heterotrimers associate to form the active enzyme.

The protein localises to the cytoplasm. It catalyses the reaction urea + 2 H2O + H(+) = hydrogencarbonate + 2 NH4(+). It functions in the pathway nitrogen metabolism; urea degradation; CO(2) and NH(3) from urea (urease route): step 1/1. In Mycobacteroides abscessus (strain ATCC 19977 / DSM 44196 / CCUG 20993 / CIP 104536 / JCM 13569 / NCTC 13031 / TMC 1543 / L948) (Mycobacterium abscessus), this protein is Urease subunit gamma.